Consider the following 81-residue polypeptide: Small cysteine-rich protein 1 2 (81 aa).

A signal peptide spans 1-19 (MGVNFNICLLLLLVATISS). The propeptide occupies 20-39 (QPLKATEKDDSTDENPFGIY).

Belongs to the Cnidaria small cysteine-rich protein (SCRiP) family. alpha subfamily. In terms of processing, the basic myotoxic domain of rattlesnake crotamine toxins (with 6 Cys residues) has been detected in this protein. However, this protein contains 2 additional Cys at the C-terminal region. Hence, this protein may contain 4 disulfide bonds instead of the 3 suggested by the myotoxin domain.

It localises to the secreted. Its subcellular location is the nematocyst. Its function is as follows. Induces neurotoxic symptoms on zebrafish. Has also been claimed to be implied in calcification, but tests on homolog proteins suggest that proteins of this family have a neurotoxic function and not a calcification function. The sequence is that of Small cysteine-rich protein 1 2 from Montipora capitata (Rice coral).